An 811-amino-acid chain; its full sequence is tRNA(Met) cytidine acetyltransferase TmcA (811 aa).

Gln267 and Arg439 together coordinate ATP. The N-acetyltransferase domain maps to 473–662 (KKEVYLEEPD…GEFTAIVLKP (190 aa)). Acetyl-CoA-binding positions include 589–591 (IAT), Glu629, and Arg636.

This sequence belongs to the TmcA family.

The protein resides in the cytoplasm. It carries out the reaction cytidine(34) in elongator tRNA(Met) + acetyl-CoA + ATP + H2O = N(4)-acetylcytidine(34) in elongator tRNA(Met) + ADP + phosphate + CoA + H(+). The catalysed reaction is a cytidine in RNA + acetyl-CoA + ATP + H2O = an N(4)-acetylcytidine in RNA + ADP + phosphate + CoA + H(+). It catalyses the reaction a cytidine in tRNA + acetyl-CoA + ATP + H2O = an N(4)-acetylcytidine in tRNA + ADP + phosphate + CoA + H(+). The enzyme catalyses a cytidine in mRNA + acetyl-CoA + ATP + H2O = an N(4)-acetylcytidine in mRNA + ADP + phosphate + CoA + H(+). Its function is as follows. Catalyzes the formation of N(4)-acetylcytidine (ac(4)C) at the wobble position of tRNA(Met), by using acetyl-CoA as an acetyl donor and ATP (or GTP). In terms of biological role, catalyzes the formation of 267 N(4)-acetylcytidine (ac(4)C) sites in RNA, almost always on the middle C of a CCG motif. Modifications are found in rRNA, ncRNA, mRNA and tRNA. More acetylation is observed at 95 than at 75 or 85 degrees Celsius. This chain is tRNA(Met) cytidine acetyltransferase TmcA, found in Thermococcus sp. (strain AM4).